The primary structure comprises 248 residues: Large ribosomal subunit protein uL2 (248 aa).

The segment at 203-248 (AHPAGGGHHPKGLTPAPRNAPPGRKVGHIAPRRTGRKKGASRTPTQ) is disordered. Residues 227 to 242 (KVGHIAPRRTGRKKGA) show a composition bias toward basic residues.

It belongs to the universal ribosomal protein uL2 family. As to quaternary structure, part of the 50S ribosomal subunit. Forms a bridge to the 30S subunit in the 70S ribosome.

In terms of biological role, one of the primary rRNA binding proteins. Required for association of the 30S and 50S subunits to form the 70S ribosome, for tRNA binding and peptide bond formation. It has been suggested to have peptidyltransferase activity; this is somewhat controversial. Makes several contacts with the 16S rRNA in the 70S ribosome. This Thermofilum pendens (strain DSM 2475 / Hrk 5) protein is Large ribosomal subunit protein uL2.